Consider the following 516-residue polypeptide: Myocyte-specific enhancer factor 2A homolog (516 aa).

An interaction with hdac9 region spans residues 1-100 (MGRKKIQITR…KGLNGCESPD (100 aa)). In terms of domain architecture, MADS-box spans 3–57 (RKKIQITRIMDERNRQVTFTKRKFGLMKKAYELSVLCDCEIALIIFNSSNKLFQY). A DNA-binding region (mef2-type) is located at residues 58-86 (ASTDMDKVLLKYTEYNEPHESRTNSDIVE). A disordered region spans residues 318 to 339 (PSSKGMMPPLNTQRVTSSQGTQ). The span at 327–339 (LNTQRVTSSQGTQ) shows a compositional bias: polar residues. Threonine 343 is subject to Phosphothreonine; by NLK. Serine 386 bears the Phosphoserine; by NLK mark. The span at 420–433 (GSNLSINTNQNINI) shows a compositional bias: polar residues. Positions 420–516 (GSNLSINTNQ…KRMRMDAWVT (97 aa)) are disordered. A compositionally biased stretch (low complexity) spans 465-475 (DSLSSSSSSYD). 2 stretches are compositionally biased toward basic and acidic residues: residues 476–486 (GSDREDVRNDF) and 497–516 (NNED…AWVT).

The protein belongs to the MEF2 family. In terms of assembly, interacts with hdac9 and nlk2. As to expression, restricted to the somitic mesoderm of early embryos. Expressed in the head region of neurula stage embryos and in body muscle (myotomes) of the tadpole. Expressed in all tissues examined in the adult.

It localises to the nucleus. May regulate muscle-specific transcription in the embryo and may regulate transcription of a variety of cell types in the adult. Binds to the sequence 5'-CTA[TA]4TAR-3'. Acts downstream of nlk2 in anterior neural development, including eye formation. This is Myocyte-specific enhancer factor 2A homolog (mef2a) from Xenopus laevis (African clawed frog).